A 130-amino-acid polypeptide reads, in one-letter code: Riboflavin kinase (130 aa).

Position 10–15 (10–15 (GFGEGK)) interacts with CDP. Mg(2+) contacts are provided by Thr-39 and Asn-41. FMN contacts are provided by Thr-96 and Glu-104. Residue 109-112 (VNLR) participates in CDP binding.

It belongs to the archaeal riboflavin kinase family. Requires Mg(2+) as cofactor.

The catalysed reaction is riboflavin + CTP = CDP + FMN + H(+). The protein operates within cofactor biosynthesis; FMN biosynthesis; FMN from riboflavin (CTP route): step 1/1. Functionally, catalyzes the CTP-dependent phosphorylation of riboflavin (vitamin B2) to form flavin mononucleotide (FMN). In Methanococcus vannielii (strain ATCC 35089 / DSM 1224 / JCM 13029 / OCM 148 / SB), this protein is Riboflavin kinase.